Here is a 160-residue protein sequence, read N- to C-terminus: MIP18 family protein F45G2.10 (160 aa).

A disordered region spans residues Met-1–Val-32.

This sequence belongs to the MIP18 family.

Its function is as follows. May play a role in chromosome segregation through establishment of sister chromatid cohesion. The chain is MIP18 family protein F45G2.10 from Caenorhabditis elegans.